Consider the following 123-residue polypeptide: Large ribosomal subunit protein eL8 (123 aa).

Belongs to the eukaryotic ribosomal protein eL8 family. As to quaternary structure, part of the 50S ribosomal subunit. Probably part of the RNase P complex.

It localises to the cytoplasm. Its function is as follows. Multifunctional RNA-binding protein that recognizes the K-turn motif in ribosomal RNA, the RNA component of RNase P, box H/ACA, box C/D and box C'/D' sRNAs. The sequence is that of Large ribosomal subunit protein eL8 from Pyrococcus abyssi (strain GE5 / Orsay).